The primary structure comprises 375 residues: Queuine tRNA-ribosyltransferase (375 aa).

Aspartate 90 serves as the catalytic Proton acceptor. Substrate is bound by residues 90–94, aspartate 144, glutamine 190, and glycine 217; that span reads DSGGF. The segment at 248–254 is RNA binding; it reads GIGTPHY. Aspartate 267 functions as the Nucleophile in the catalytic mechanism. The RNA binding; important for wobble base 34 recognition stretch occupies residues 272-276; sequence TRIAR. Residues cysteine 305, cysteine 307, cysteine 310, and histidine 336 each contribute to the Zn(2+) site.

The protein belongs to the queuine tRNA-ribosyltransferase family. In terms of assembly, homodimer. Within each dimer, one monomer is responsible for RNA recognition and catalysis, while the other monomer binds to the replacement base PreQ1. Zn(2+) serves as cofactor.

It carries out the reaction 7-aminomethyl-7-carbaguanine + guanosine(34) in tRNA = 7-aminomethyl-7-carbaguanosine(34) in tRNA + guanine. It functions in the pathway tRNA modification; tRNA-queuosine biosynthesis. Functionally, catalyzes the base-exchange of a guanine (G) residue with the queuine precursor 7-aminomethyl-7-deazaguanine (PreQ1) at position 34 (anticodon wobble position) in tRNAs with GU(N) anticodons (tRNA-Asp, -Asn, -His and -Tyr). Catalysis occurs through a double-displacement mechanism. The nucleophile active site attacks the C1' of nucleotide 34 to detach the guanine base from the RNA, forming a covalent enzyme-RNA intermediate. The proton acceptor active site deprotonates the incoming PreQ1, allowing a nucleophilic attack on the C1' of the ribose to form the product. After dissociation, two additional enzymatic reactions on the tRNA convert PreQ1 to queuine (Q), resulting in the hypermodified nucleoside queuosine (7-(((4,5-cis-dihydroxy-2-cyclopenten-1-yl)amino)methyl)-7-deazaguanosine). This chain is Queuine tRNA-ribosyltransferase, found in Borrelia duttonii (strain Ly).